The following is an 815-amino-acid chain: Ent-sandaracopimara-8(14),15-diene synthase, chloroplastic (815 aa).

The N-terminal 38 residues, 1–38, are a transit peptide targeting the chloroplast; the sequence is MLPSSICSMGQIPRTSPHYYGMLPKQMSKGHPPMVTRA. Positions 550, 554, 696, 700, and 704 each coordinate Mg(2+). The DDXXD motif signature appears at 550-554; that stretch reads DDFFD.

This sequence belongs to the terpene synthase family. Requires Mg(2+) as cofactor.

Its subcellular location is the plastid. It localises to the chloroplast. It catalyses the reaction ent-copalyl diphosphate = ent-sandaracopimara-8(14),15-diene + diphosphate. The enzyme catalyses 9alpha-copalyl diphosphate = (12E)-9alpha-labda-8(17),12,14-triene + diphosphate. In terms of biological role, involved in the biosynthesis of oryzalexin A-F phytoalexins. Catalyzes the conversion of ent-copalyl diphosphate to the phytoalexin precursor ent-sandaracopimaradiene. The polypeptide is Ent-sandaracopimara-8(14),15-diene synthase, chloroplastic (Oryza sativa subsp. japonica (Rice)).